Reading from the N-terminus, the 320-residue chain is Ferrochelatase (320 aa).

Fe cation contacts are provided by His-194 and Glu-275.

The protein belongs to the ferrochelatase family. Monomer.

The protein localises to the cytoplasm. The catalysed reaction is heme b + 2 H(+) = protoporphyrin IX + Fe(2+). It participates in porphyrin-containing compound metabolism; protoheme biosynthesis; protoheme from protoporphyrin-IX: step 1/1. In terms of biological role, catalyzes the ferrous insertion into protoporphyrin IX. The protein is Ferrochelatase of Escherichia coli O81 (strain ED1a).